The sequence spans 262 residues: Hydroxyethylthiazole kinase (262 aa).

Residue M43 participates in substrate binding. 2 residues coordinate ATP: R118 and T164. A191 lines the substrate pocket.

Belongs to the Thz kinase family. Mg(2+) is required as a cofactor.

The catalysed reaction is 5-(2-hydroxyethyl)-4-methylthiazole + ATP = 4-methyl-5-(2-phosphooxyethyl)-thiazole + ADP + H(+). It functions in the pathway cofactor biosynthesis; thiamine diphosphate biosynthesis; 4-methyl-5-(2-phosphoethyl)-thiazole from 5-(2-hydroxyethyl)-4-methylthiazole: step 1/1. Catalyzes the phosphorylation of the hydroxyl group of 4-methyl-5-beta-hydroxyethylthiazole (THZ). The chain is Hydroxyethylthiazole kinase from Cereibacter sphaeroides (strain ATCC 17025 / ATH 2.4.3) (Rhodobacter sphaeroides).